We begin with the raw amino-acid sequence, 290 residues long: Light-independent protochlorophyllide reductase iron-sulfur ATP-binding protein (290 aa).

ATP-binding positions include 10–15 and Lys-39; that span reads GIGKST. Ser-14 contributes to the Mg(2+) binding site. 2 residues coordinate [4Fe-4S] cluster: Cys-95 and Cys-129. 180-181 contributes to the ATP binding site; sequence NR.

It belongs to the NifH/BchL/ChlL family. In terms of assembly, homodimer. Protochlorophyllide reductase is composed of three subunits; ChlL, ChlN and ChlB. [4Fe-4S] cluster is required as a cofactor.

It is found in the plastid. It localises to the chloroplast. The catalysed reaction is chlorophyllide a + oxidized 2[4Fe-4S]-[ferredoxin] + 2 ADP + 2 phosphate = protochlorophyllide a + reduced 2[4Fe-4S]-[ferredoxin] + 2 ATP + 2 H2O. The protein operates within porphyrin-containing compound metabolism; chlorophyll biosynthesis (light-independent). Functionally, component of the dark-operative protochlorophyllide reductase (DPOR) that uses Mg-ATP and reduced ferredoxin to reduce ring D of protochlorophyllide (Pchlide) to form chlorophyllide a (Chlide). This reaction is light-independent. The L component serves as a unique electron donor to the NB-component of the complex, and binds Mg-ATP. The polypeptide is Light-independent protochlorophyllide reductase iron-sulfur ATP-binding protein (Porphyra purpurea (Red seaweed)).